The sequence spans 342 residues: Anthranilate phosphoribosyltransferase (342 aa).

Residues Gly-83, 86-87, Thr-91, 93-96, 111-119, and Ser-123 each bind 5-phospho-alpha-D-ribose 1-diphosphate; these read GD, NIST, and KHGNRGVSS. Gly-83 lines the anthranilate pocket. Residue Ser-95 participates in Mg(2+) binding. Asn-114 contacts anthranilate. Position 169 (Arg-169) interacts with anthranilate. Positions 228 and 229 each coordinate Mg(2+).

It belongs to the anthranilate phosphoribosyltransferase family. Homodimer. It depends on Mg(2+) as a cofactor.

It carries out the reaction N-(5-phospho-beta-D-ribosyl)anthranilate + diphosphate = 5-phospho-alpha-D-ribose 1-diphosphate + anthranilate. It participates in amino-acid biosynthesis; L-tryptophan biosynthesis; L-tryptophan from chorismate: step 2/5. Its function is as follows. Catalyzes the transfer of the phosphoribosyl group of 5-phosphorylribose-1-pyrophosphate (PRPP) to anthranilate to yield N-(5'-phosphoribosyl)-anthranilate (PRA). The polypeptide is Anthranilate phosphoribosyltransferase (Paraburkholderia phymatum (strain DSM 17167 / CIP 108236 / LMG 21445 / STM815) (Burkholderia phymatum)).